Here is a 563-residue protein sequence, read N- to C-terminus: Arginine--tRNA ligase (563 aa).

The short motif at 121–131 is the 'HIGH' region element; the sequence is PNIAKPFSIGH.

Belongs to the class-I aminoacyl-tRNA synthetase family. Monomer.

The protein resides in the cytoplasm. It carries out the reaction tRNA(Arg) + L-arginine + ATP = L-arginyl-tRNA(Arg) + AMP + diphosphate. The protein is Arginine--tRNA ligase of Streptococcus thermophilus (strain ATCC BAA-250 / LMG 18311).